The primary structure comprises 347 residues: Holliday junction branch migration complex subunit RuvB (347 aa).

Positions 1-186 (MKDENSISFL…FGITARFELY (186 aa)) are large ATPase domain (RuvB-L). Residues L25, R26, G67, K70, T71, T72, 133-135 (EDY), R176, Y186, and R223 each bind ATP. T71 is a binding site for Mg(2+). Residues 187–257 (SEIELVEIIK…IVSIGLEMLR (71 aa)) form a small ATPAse domain (RuvB-S) region. Positions 260–347 (GEGLDEQDRN…GLNENQRVSF (88 aa)) are head domain (RuvB-H). DNA-binding residues include R315 and R320.

The protein belongs to the RuvB family. In terms of assembly, homohexamer. Forms an RuvA(8)-RuvB(12)-Holliday junction (HJ) complex. HJ DNA is sandwiched between 2 RuvA tetramers; dsDNA enters through RuvA and exits via RuvB. An RuvB hexamer assembles on each DNA strand where it exits the tetramer. Each RuvB hexamer is contacted by two RuvA subunits (via domain III) on 2 adjacent RuvB subunits; this complex drives branch migration. In the full resolvosome a probable DNA-RuvA(4)-RuvB(12)-RuvC(2) complex forms which resolves the HJ.

The protein resides in the cytoplasm. The enzyme catalyses ATP + H2O = ADP + phosphate + H(+). The RuvA-RuvB-RuvC complex processes Holliday junction (HJ) DNA during genetic recombination and DNA repair, while the RuvA-RuvB complex plays an important role in the rescue of blocked DNA replication forks via replication fork reversal (RFR). RuvA specifically binds to HJ cruciform DNA, conferring on it an open structure. The RuvB hexamer acts as an ATP-dependent pump, pulling dsDNA into and through the RuvAB complex. RuvB forms 2 homohexamers on either side of HJ DNA bound by 1 or 2 RuvA tetramers; 4 subunits per hexamer contact DNA at a time. Coordinated motions by a converter formed by DNA-disengaged RuvB subunits stimulates ATP hydrolysis and nucleotide exchange. Immobilization of the converter enables RuvB to convert the ATP-contained energy into a lever motion, pulling 2 nucleotides of DNA out of the RuvA tetramer per ATP hydrolyzed, thus driving DNA branch migration. The RuvB motors rotate together with the DNA substrate, which together with the progressing nucleotide cycle form the mechanistic basis for DNA recombination by continuous HJ branch migration. Branch migration allows RuvC to scan DNA until it finds its consensus sequence, where it cleaves and resolves cruciform DNA. The chain is Holliday junction branch migration complex subunit RuvB from Borreliella burgdorferi (strain ATCC 35210 / DSM 4680 / CIP 102532 / B31) (Borrelia burgdorferi).